The chain runs to 310 residues: Putative S-adenosyl-L-methionine-dependent methyltransferase MMAR_0357 (310 aa).

S-adenosyl-L-methionine-binding positions include Asp132 and 161-162 (DL).

It belongs to the UPF0677 family.

Its function is as follows. Exhibits S-adenosyl-L-methionine-dependent methyltransferase activity. This is Putative S-adenosyl-L-methionine-dependent methyltransferase MMAR_0357 from Mycobacterium marinum (strain ATCC BAA-535 / M).